Here is a 242-residue protein sequence, read N- to C-terminus: Probable ABC transporter ATP-binding protein PEB1C (242 aa).

An ABC transporter domain is found at 2–236; the sequence is IELKNVNKYY…PKTERARLFL (235 aa). 34 to 41 is an ATP binding site; sequence GPSGSGKS.

It belongs to the ABC transporter superfamily.

Its subcellular location is the cell inner membrane. Its function is as follows. Most probably involved, with PEB1, in a binding-protein-dependent transport system for an amino acid. Probably responsible for energy coupling to the transport system. The sequence is that of Probable ABC transporter ATP-binding protein PEB1C (peb1C) from Campylobacter jejuni subsp. jejuni serotype O:23/36 (strain 81-176).